A 357-amino-acid chain; its full sequence is S-adenosylmethionine:tRNA ribosyltransferase-isomerase (357 aa).

Belongs to the QueA family. Monomer.

It is found in the cytoplasm. It carries out the reaction 7-aminomethyl-7-carbaguanosine(34) in tRNA + S-adenosyl-L-methionine = epoxyqueuosine(34) in tRNA + adenine + L-methionine + 2 H(+). It participates in tRNA modification; tRNA-queuosine biosynthesis. In terms of biological role, transfers and isomerizes the ribose moiety from AdoMet to the 7-aminomethyl group of 7-deazaguanine (preQ1-tRNA) to give epoxyqueuosine (oQ-tRNA). In Edwardsiella ictaluri (strain 93-146), this protein is S-adenosylmethionine:tRNA ribosyltransferase-isomerase.